The following is a 190-amino-acid chain: CASP-like protein 2U2 (190 aa).

Residues 1–10 are Cytoplasmic-facing; the sequence is MGEKMQGFQG. A helical transmembrane segment spans residues 11–31; the sequence is WSIGIRFLTSCVSIASLILLL. Over 32–59 the chain is Extracellular; the sequence is KSKQTVQVSVGLDYVTQQVKYSDTSAFV. The chain crosses the membrane as a helical span at residues 60–80; it reads YLVFSDILVAVYCIVVLVGLI. Residues 81–94 lie on the Cytoplasmic side of the membrane; it reads PAALGKSHPGKAGQ. A helical membrane pass occupies residues 95–115; it reads WAIFIFDQVLAYVLLAAASSA. Residues 116-144 lie on the Extracellular side of the membrane; the sequence is TEVAYLADKGMAKTSWEAVCPRFAHFCHT. Residues 145 to 165 form a helical membrane-spanning segment; the sequence is VMASISLSFVAVLLLALLAVV. Topologically, residues 166–190 are cytoplasmic; that stretch reads SASGLFGRFYRRPLFAVKMRHNTLI.

Belongs to the Casparian strip membrane proteins (CASP) family. As to quaternary structure, homodimer and heterodimers.

It localises to the cell membrane. The protein is CASP-like protein 2U2 of Pteridium aquilinum subsp. aquilinum (Bracken fern).